The primary structure comprises 562 residues: Dihydroxy-acid dehydratase (562 aa).

Cysteine 53 is a binding site for [2Fe-2S] cluster. Position 85 (aspartate 85) interacts with Mg(2+). Position 126 (cysteine 126) interacts with [2Fe-2S] cluster. The Mg(2+) site is built by aspartate 127 and lysine 128. Lysine 128 bears the N6-carboxylysine mark. [2Fe-2S] cluster is bound at residue cysteine 198. Residue glutamate 449 coordinates Mg(2+). Serine 475 functions as the Proton acceptor in the catalytic mechanism.

It belongs to the IlvD/Edd family. As to quaternary structure, homodimer. [2Fe-2S] cluster is required as a cofactor. It depends on Mg(2+) as a cofactor.

It carries out the reaction (2R)-2,3-dihydroxy-3-methylbutanoate = 3-methyl-2-oxobutanoate + H2O. The catalysed reaction is (2R,3R)-2,3-dihydroxy-3-methylpentanoate = (S)-3-methyl-2-oxopentanoate + H2O. The protein operates within amino-acid biosynthesis; L-isoleucine biosynthesis; L-isoleucine from 2-oxobutanoate: step 3/4. It participates in amino-acid biosynthesis; L-valine biosynthesis; L-valine from pyruvate: step 3/4. In terms of biological role, functions in the biosynthesis of branched-chain amino acids. Catalyzes the dehydration of (2R,3R)-2,3-dihydroxy-3-methylpentanoate (2,3-dihydroxy-3-methylvalerate) into 2-oxo-3-methylpentanoate (2-oxo-3-methylvalerate) and of (2R)-2,3-dihydroxy-3-methylbutanoate (2,3-dihydroxyisovalerate) into 2-oxo-3-methylbutanoate (2-oxoisovalerate), the penultimate precursor to L-isoleucine and L-valine, respectively. The sequence is that of Dihydroxy-acid dehydratase from Methylococcus capsulatus (strain ATCC 33009 / NCIMB 11132 / Bath).